The sequence spans 92 residues: Small ribosomal subunit protein bS18 (92 aa).

This sequence belongs to the bacterial ribosomal protein bS18 family. As to quaternary structure, part of the 30S ribosomal subunit. Forms a tight heterodimer with protein bS6.

Binds as a heterodimer with protein bS6 to the central domain of the 16S rRNA, where it helps stabilize the platform of the 30S subunit. This chain is Small ribosomal subunit protein bS18, found in Pelagibacter ubique (strain HTCC1062).